A 212-amino-acid chain; its full sequence is COP9 signalosome complex subunit 8 (212 aa).

In terms of domain architecture, PCI spans 26–193; sequence TSLSAYEEQA…KPVVTAPPKD (168 aa).

The protein belongs to the CSN8 family. As to quaternary structure, component of the COP9 signalosome (CSN) complex.

It is found in the cytoplasm. The protein resides in the nucleus. Functionally, component of the COP9 signalosome (CSN) complex that acts as an regulator of the ubiquitin (Ubl) conjugation pathway by mediating the deneddylation of the cullin subunit of SCF-type E3 ubiquitin-protein ligase complexes. The CSN complex seems to link protein degradation to sexual development. This Emericella nidulans (strain FGSC A4 / ATCC 38163 / CBS 112.46 / NRRL 194 / M139) (Aspergillus nidulans) protein is COP9 signalosome complex subunit 8 (csnH).